Here is a 341-residue protein sequence, read N- to C-terminus: Tetraacyldisaccharide 4'-kinase (341 aa).

Threonine 65–threonine 72 provides a ligand contact to ATP.

The protein belongs to the LpxK family.

It catalyses the reaction a lipid A disaccharide + ATP = a lipid IVA + ADP + H(+). Its pathway is glycolipid biosynthesis; lipid IV(A) biosynthesis; lipid IV(A) from (3R)-3-hydroxytetradecanoyl-[acyl-carrier-protein] and UDP-N-acetyl-alpha-D-glucosamine: step 6/6. Functionally, transfers the gamma-phosphate of ATP to the 4'-position of a tetraacyldisaccharide 1-phosphate intermediate (termed DS-1-P) to form tetraacyldisaccharide 1,4'-bis-phosphate (lipid IVA). This is Tetraacyldisaccharide 4'-kinase from Shewanella woodyi (strain ATCC 51908 / MS32).